Consider the following 1184-residue polypeptide: DNA-directed RNA polymerase subunit beta (1184 aa).

Residues 1160-1184 (DDDFTNQNDAFNIVQPENAATEKTE) are disordered.

Belongs to the RNA polymerase beta chain family. As to quaternary structure, the RNAP catalytic core consists of 2 alpha, 1 beta, 1 beta' and 1 omega subunit. When a sigma factor is associated with the core the holoenzyme is formed, which can initiate transcription.

It catalyses the reaction RNA(n) + a ribonucleoside 5'-triphosphate = RNA(n+1) + diphosphate. In terms of biological role, DNA-dependent RNA polymerase catalyzes the transcription of DNA into RNA using the four ribonucleoside triphosphates as substrates. The protein is DNA-directed RNA polymerase subunit beta of Listeria innocua serovar 6a (strain ATCC BAA-680 / CLIP 11262).